A 102-amino-acid chain; its full sequence is Small ribosomal subunit protein uS10 (102 aa).

Belongs to the universal ribosomal protein uS10 family. Part of the 30S ribosomal subunit.

In terms of biological role, involved in the binding of tRNA to the ribosomes. This chain is Small ribosomal subunit protein uS10, found in Methanococcus maripaludis (strain C6 / ATCC BAA-1332).